A 912-amino-acid chain; its full sequence is MPGKSGLGWWWARLPLCLLLSLYGPWMPSSLGKPKGHPHMNSIRIDGDITLGGLFPVHGRGSEGKACGELKKEKGIHRLEAMLFALDRINNDPDLLPNITLGARILDTCSRDTHALEQSLTFVQALIEKDGTEVRCGSGGPPIITKPERVVGVIGASGSSVSIMVANILRLFKIPQISYASTAPDLSDNSRYDFFSRVVPSDTYQAQAMVDIVRALKWNYVSTVASEGSYGESGVEAFIQKSREDGGVCIAQSVKIPREPKAGEFDKIIRRLLETSNARAVIIFANEDDIRRVLEAARRANQTGHFFWMGSDSWGSKIAPVLHLEEVAEGAVTILPKRMSVRGFDRYFSSRTLDNNRRNIWFAEFWEDNFHCKLSRHALKKGSHVKKCTNRERIGQDSAYEQEGKVQFVIDAVYAMGHALHAMHRDLCPGRVGLCPRMDPVDGTQLLKYIRNVNFSGIAGNPVTFNENGDAPGRYDIYQYQLRNDSAEYKVIGSWTDHLHLRIERMHWPGSGQQLPRSICSLPCQPGERKKTVKGMPCCWHCEPCTGYQYQVDRYTCKTCPYDMRPTENRTGCRPIPIIKLEWDSPWAVLPLFLAVVGIAATLFVVITFVRYNDTPIVKASGRELSYVLLAGIFLCYATTFLMIAEPDLGTCSLRRIFLGLGMSISYAALLTKTNRIYRIFEQGKRSVSAPRFISPASQLAITFSLISLQLLGICVWFVVDPSHSVVDFQDQRTLDPRFARGVLKCDISDLSLICLLGYSMLLMVTCTVYAIKTRGVPETFNEAKPIGFTMYTTCIVWLAFIPIFFGTSQSADKLYIQTTTLTVSVSLSASVSLGMLYMPKVYIILFHPEQNVPKRKRSLKAVVTAATMSNKFTQKGNFRPNGEAKSELCENLEAPALATKQTYVTYTNHAI.

The first 32 residues, 1 to 32 (MPGKSGLGWWWARLPLCLLLSLYGPWMPSSLG), serve as a signal peptide directing secretion. Topologically, residues 33–586 (KPKGHPHMNS…PIIKLEWDSP (554 aa)) are extracellular. A disulfide bond links cysteine 67 and cysteine 109. A glycan (N-linked (GlcNAc...) asparagine) is linked at asparagine 98. L-glutamate is bound by residues serine 159, 180-182 (AST), and tyrosine 230. Cystine bridges form between cysteine 249-cysteine 538, cysteine 372-cysteine 388, cysteine 428-cysteine 435, cysteine 520-cysteine 539, cysteine 524-cysteine 542, cysteine 545-cysteine 557, and cysteine 560-cysteine 573. Residue asparagine 301 is glycosylated (N-linked (GlcNAc...) asparagine). An L-glutamate-binding site is contributed by aspartate 312. Residue lysine 405 participates in L-glutamate binding. Asparagine 454 and asparagine 484 each carry an N-linked (GlcNAc...) asparagine glycan. N-linked (GlcNAc...) asparagine glycosylation is present at asparagine 569. A helical transmembrane segment spans residues 587 to 607 (WAVLPLFLAVVGIAATLFVVI). Residues 608-624 (TFVRYNDTPIVKASGRE) are Cytoplasmic-facing. Residues 625-645 (LSYVLLAGIFLCYATTFLMIA) form a helical membrane-spanning segment. Topologically, residues 646 to 653 (EPDLGTCS) are extracellular. Residues 654 to 671 (LRRIFLGLGMSISYAALL) form a helical membrane-spanning segment. Residues 672-699 (TKTNRIYRIFEQGKRSVSAPRFISPASQ) lie on the Cytoplasmic side of the membrane. Residues 700–720 (LAITFSLISLQLLGICVWFVV) traverse the membrane as a helical segment. Residues 721 to 751 (DPSHSVVDFQDQRTLDPRFARGVLKCDISDL) are Extracellular-facing. A helical transmembrane segment spans residues 752–772 (SLICLLGYSMLLMVTCTVYAI). At 773-786 (KTRGVPETFNEAKP) the chain is on the cytoplasmic side. A helical transmembrane segment spans residues 787–807 (IGFTMYTTCIVWLAFIPIFFG). The Extracellular segment spans residues 808–826 (TSQSADKLYIQTTTLTVSV). The chain crosses the membrane as a helical span at residues 827–847 (SLSASVSLGMLYMPKVYIILF). Residues 848–912 (HPEQNVPKRK…TYVTYTNHAI (65 aa)) lie on the Cytoplasmic side of the membrane.

This sequence belongs to the G-protein coupled receptor 3 family. In terms of assembly, interacts with PICK1.

The protein localises to the cell membrane. G-protein coupled receptor for glutamate. Ligand binding causes a conformation change that triggers signaling via guanine nucleotide-binding proteins (G proteins) and modulates the activity of down-stream effectors. Signaling inhibits adenylate cyclase activity. In Macaca fascicularis (Crab-eating macaque), this protein is Metabotropic glutamate receptor 4 (GRM4).